The primary structure comprises 329 residues: Haptoglobin (329 aa).

Asparagine 9 carries an N-linked (GlcNAc...) asparagine glycan. Residues 13 to 70 enclose the Sushi domain; it reads VSLPKPPVIENGYVEHMIRYQCKPFYKLHTEGDGVYTLNSEKHWTNKAVGEKLPECEA. Intrachain disulfides connect cysteine 34-cysteine 68 and cysteine 72-cysteine 189. A propeptide is located at residue arginine 84. The 243-residue stretch at 85–327 folds into the Peptidase S1 domain; it reads IMGGSVDAKG…VLAWVQETIA (243 aa). N-linked (GlcNAc...) asparagine glycans are attached at residues asparagine 107 and asparagine 214. Cystine bridges form between cysteine 232–cysteine 263 and cysteine 274–cysteine 304. Positions 241–246 are interaction with CD163; it reads VPEKKS.

It belongs to the peptidase S1 family. Tetramer of two alpha and two beta chains; disulfide-linked. The hemoglobin/haptoglobin complex is composed of a haptoglobin dimer bound to two hemoglobin alpha-beta dimers. Interacts with CD163. Interacts with ERGIC3. Expressed by the liver and secreted in plasma.

The protein resides in the secreted. It localises to the extracellular space. Functionally, as a result of hemolysis, hemoglobin is found to accumulate in the kidney and is secreted in the urine. Haptoglobin captures, and combines with free plasma hemoglobin to allow hepatic recycling of heme iron and to prevent kidney damage. Haptoglobin also acts as an antioxidant, has antibacterial activity and plays a role in modulating many aspects of the acute phase response. Hemoglobin/haptoglobin complexes are rapidly cleared by the macrophage CD163 scavenger receptor expressed on the surface of liver Kupfer cells through an endocytic lysosomal degradation pathway. In Canis lupus familiaris (Dog), this protein is Haptoglobin (HP).